A 489-amino-acid chain; its full sequence is E3 ubiquitin-protein ligase RGLG1 (489 aa).

A compositionally biased stretch (basic and acidic residues) spans 1-10; that stretch reads MGGGNSKEES. The segment at 1 to 125 is disordered; that stretch reads MGGGNSKEES…SQSQVADRKK (125 aa). The N-myristoyl glycine moiety is linked to residue Gly2. The segment covering 11–23 has biased composition (low complexity); that stretch reads SSPSSSSWASHQS. The span at 34 to 57 shows a compositional bias: pro residues; that stretch reads YPPPPTYAPAPSPAPAPAPVPAPS. A compositionally biased stretch (low complexity) spans 58–75; sequence PASSYGPQYSQEGYASQP. Over residues 76–88 the composition is skewed to pro residues; that stretch reads NNPPPPTYAPAPS. Residues 156-376 enclose the VWFA domain; the sequence is NLIVGIDFTK…KETEFALSAL (221 aa). The RING-type zinc finger occupies 446–479; that stretch reads CPICLSNPKNMAFGCGHQTCCECGPDLKVCPICR.

In terms of assembly, interacts with the heterodimer UBC35/UEV1B. Interacts with ERF053. Interacts with PP2CA. Post-translationally, N-myristoylated. In terms of tissue distribution, ubiquitously expressed.

The protein resides in the cell membrane. The protein localises to the nucleus. The enzyme catalyses S-ubiquitinyl-[E2 ubiquitin-conjugating enzyme]-L-cysteine + [acceptor protein]-L-lysine = [E2 ubiquitin-conjugating enzyme]-L-cysteine + N(6)-ubiquitinyl-[acceptor protein]-L-lysine.. In terms of biological role, E3 ubiquitin-protein ligase that mediates the formation of 'Lys-63'-linked ubiquitin chains. Regulates apical dominance by acting on the auxin transport proteins abundance. Together with RGLG5, mediates the ubiquitination and subsequent proteasomal degradation of the target protein PP2CA. Functions as a positive regulator of abscisic acid (ABA) signaling through ABA-dependent degradation of PP2CA, a major inhibitor of ABA signaling. Acts as a negative regulator of drought stress response. This Arabidopsis thaliana (Mouse-ear cress) protein is E3 ubiquitin-protein ligase RGLG1.